The sequence spans 490 residues: Cis-aconitate decarboxylase (490 aa).

It belongs to the PrpD family. Homodimer.

Its subcellular location is the mitochondrion. It catalyses the reaction cis-aconitate + H(+) = itaconate + CO2. Functionally, involved in the production of itaconic acid, a soluble unsaturated dicarboxylic acid mainly produced from sugars. The chain is Cis-aconitate decarboxylase (cad1) from Aspergillus terreus (strain NIH 2624 / FGSC A1156).